The sequence spans 395 residues: S-adenosylmethionine synthase (395 aa).

Residue His-16 coordinates ATP. Mg(2+) is bound at residue Asp-18. Residue Glu-44 coordinates K(+). The L-methionine site is built by Glu-57 and Gln-100. A flexible loop region spans residues 100 to 110 (QSPDIAQGVDR). ATP is bound by residues 167–169 (DAK), 233–234 (RF), Asp-242, 248–249 (RK), Ala-265, and Lys-269. Asp-242 serves as a coordination point for L-methionine. Lys-273 provides a ligand contact to L-methionine.

It belongs to the AdoMet synthase family. Homotetramer; dimer of dimers. Mg(2+) is required as a cofactor. K(+) serves as cofactor.

Its subcellular location is the cytoplasm. The catalysed reaction is L-methionine + ATP + H2O = S-adenosyl-L-methionine + phosphate + diphosphate. The protein operates within amino-acid biosynthesis; S-adenosyl-L-methionine biosynthesis; S-adenosyl-L-methionine from L-methionine: step 1/1. Functionally, catalyzes the formation of S-adenosylmethionine (AdoMet) from methionine and ATP. The overall synthetic reaction is composed of two sequential steps, AdoMet formation and the subsequent tripolyphosphate hydrolysis which occurs prior to release of AdoMet from the enzyme. The chain is S-adenosylmethionine synthase from Burkholderia vietnamiensis (strain G4 / LMG 22486) (Burkholderia cepacia (strain R1808)).